The primary structure comprises 898 residues: DNA gyrase subunit A (898 aa).

2 disordered regions span residues 1–22 (MSDD…DDDS) and 36–56 (EEEK…EKEG). Residues 97 to 562 (LPDARDGLKP…VMSSINNEDL (466 aa)) enclose the Topo IIA-type catalytic domain. Tyrosine 185 (O-(5'-phospho-DNA)-tyrosine intermediate) is an active-site residue. The short motif at 589-595 (QRRGGVG) is the GyrA-box element.

This sequence belongs to the type II topoisomerase GyrA/ParC subunit family. In terms of assembly, heterotetramer, composed of two GyrA and two GyrB chains. In the heterotetramer, GyrA contains the active site tyrosine that forms a transient covalent intermediate with DNA, while GyrB binds cofactors and catalyzes ATP hydrolysis.

It localises to the cytoplasm. The enzyme catalyses ATP-dependent breakage, passage and rejoining of double-stranded DNA.. In terms of biological role, a type II topoisomerase that negatively supercoils closed circular double-stranded (ds) DNA in an ATP-dependent manner to modulate DNA topology and maintain chromosomes in an underwound state. Negative supercoiling favors strand separation, and DNA replication, transcription, recombination and repair, all of which involve strand separation. Also able to catalyze the interconversion of other topological isomers of dsDNA rings, including catenanes and knotted rings. Type II topoisomerases break and join 2 DNA strands simultaneously in an ATP-dependent manner. The polypeptide is DNA gyrase subunit A (Metamycoplasma arthritidis (strain 158L3-1) (Mycoplasma arthritidis)).